The chain runs to 131 residues: Small ribosomal subunit protein uS8 (131 aa).

The protein belongs to the universal ribosomal protein uS8 family. As to quaternary structure, part of the 30S ribosomal subunit. Contacts proteins S5 and S12.

Its function is as follows. One of the primary rRNA binding proteins, it binds directly to 16S rRNA central domain where it helps coordinate assembly of the platform of the 30S subunit. In Nitrosomonas eutropha (strain DSM 101675 / C91 / Nm57), this protein is Small ribosomal subunit protein uS8.